The following is a 373-amino-acid chain: UDP-3-O-acylglucosamine N-acyltransferase 2 (373 aa).

Histidine 257 (proton acceptor) is an active-site residue. The segment at 346 to 373 (DGRTAASAEAAAPSSDATGVDQPDQAAS) is disordered. A compositionally biased stretch (low complexity) spans 350 to 362 (AASAEAAAPSSDA).

It belongs to the transferase hexapeptide repeat family. LpxD subfamily. Homotrimer.

The enzyme catalyses a UDP-3-O-[(3R)-3-hydroxyacyl]-alpha-D-glucosamine + a (3R)-hydroxyacyl-[ACP] = a UDP-2-N,3-O-bis[(3R)-3-hydroxyacyl]-alpha-D-glucosamine + holo-[ACP] + H(+). The protein operates within bacterial outer membrane biogenesis; LPS lipid A biosynthesis. Its function is as follows. Catalyzes the N-acylation of UDP-3-O-acylglucosamine using 3-hydroxyacyl-ACP as the acyl donor. Is involved in the biosynthesis of lipid A, a phosphorylated glycolipid that anchors the lipopolysaccharide to the outer membrane of the cell. The polypeptide is UDP-3-O-acylglucosamine N-acyltransferase 2 (Rhodopseudomonas palustris (strain BisB18)).